The following is a 318-amino-acid chain: MNIIDRFKEKILSGELISKKEAIILSKENVDKLASAANDIRMSLCGKKFNLCTIINGKSGRCGENCKYCAQSVYFKTDIEEYNLLDSESIITSAISNYNSGVHRFSVVTSGKKLTNKEIDIVCKTYSEVQEKCAIKLCASHGLLNYEELVKLKESGVIRYHNNLETSRRFFSNICTTHTFDEKINTIKNALKAGLQVCSGGIIGLGETMEDRIDMAFTLRELNVDSIPINILNPIKGTALENQEKLSYDEITKTFALFRFILPEKQIRLAGGRALLNDKGERLMKSGVNSAISGDMLTTSGIKTFDDIKMIKELGFEV.

The Radical SAM core domain maps to 44 to 273 (LCGKKFNLCT…EKQIRLAGGR (230 aa)). [4Fe-4S] cluster-binding residues include Cys-62, Cys-66, and Cys-69. Ser-106, Cys-138, Cys-198, and Arg-268 together coordinate [2Fe-2S] cluster.

The protein belongs to the radical SAM superfamily. Biotin synthase family. In terms of assembly, homodimer. [4Fe-4S] cluster is required as a cofactor. The cofactor is [2Fe-2S] cluster.

The enzyme catalyses (4R,5S)-dethiobiotin + (sulfur carrier)-SH + 2 reduced [2Fe-2S]-[ferredoxin] + 2 S-adenosyl-L-methionine = (sulfur carrier)-H + biotin + 2 5'-deoxyadenosine + 2 L-methionine + 2 oxidized [2Fe-2S]-[ferredoxin]. Its pathway is cofactor biosynthesis; biotin biosynthesis; biotin from 7,8-diaminononanoate: step 2/2. Its function is as follows. Catalyzes the conversion of dethiobiotin (DTB) to biotin by the insertion of a sulfur atom into dethiobiotin via a radical-based mechanism. The polypeptide is Biotin synthase (Clostridium botulinum (strain Alaska E43 / Type E3)).